A 459-amino-acid polypeptide reads, in one-letter code: Probable D-serine dehydratase (459 aa).

K119 bears the N6-(pyridoxal phosphate)lysine mark.

Belongs to the serine/threonine dehydratase family. DsdA subfamily. Requires pyridoxal 5'-phosphate as cofactor.

It carries out the reaction D-serine = pyruvate + NH4(+). The protein is Probable D-serine dehydratase of Geobacillus stearothermophilus (Bacillus stearothermophilus).